We begin with the raw amino-acid sequence, 246 residues long: 3-deoxy-manno-octulosonate cytidylyltransferase (246 aa).

This sequence belongs to the KdsB family.

The protein resides in the cytoplasm. It carries out the reaction 3-deoxy-alpha-D-manno-oct-2-ulosonate + CTP = CMP-3-deoxy-beta-D-manno-octulosonate + diphosphate. It functions in the pathway nucleotide-sugar biosynthesis; CMP-3-deoxy-D-manno-octulosonate biosynthesis; CMP-3-deoxy-D-manno-octulosonate from 3-deoxy-D-manno-octulosonate and CTP: step 1/1. It participates in bacterial outer membrane biogenesis; lipopolysaccharide biosynthesis. Functionally, activates KDO (a required 8-carbon sugar) for incorporation into bacterial lipopolysaccharide in Gram-negative bacteria. The chain is 3-deoxy-manno-octulosonate cytidylyltransferase from Rickettsia prowazekii (strain Madrid E).